Reading from the N-terminus, the 309-residue chain is Aspartate carbamoyltransferase catalytic subunit (309 aa).

Carbamoyl phosphate contacts are provided by Arg-54 and Thr-55. Lys-82 serves as a coordination point for L-aspartate. Carbamoyl phosphate is bound by residues Arg-104, His-132, and Gln-135. L-aspartate is bound by residues Arg-165 and Arg-219. 2 residues coordinate carbamoyl phosphate: Gly-260 and Pro-261.

The protein belongs to the aspartate/ornithine carbamoyltransferase superfamily. ATCase family. As to quaternary structure, heterododecamer (2C3:3R2) of six catalytic PyrB chains organized as two trimers (C3), and six regulatory PyrI chains organized as three dimers (R2).

It carries out the reaction carbamoyl phosphate + L-aspartate = N-carbamoyl-L-aspartate + phosphate + H(+). The protein operates within pyrimidine metabolism; UMP biosynthesis via de novo pathway; (S)-dihydroorotate from bicarbonate: step 2/3. Catalyzes the condensation of carbamoyl phosphate and aspartate to form carbamoyl aspartate and inorganic phosphate, the committed step in the de novo pyrimidine nucleotide biosynthesis pathway. In Parafrankia sp. (strain EAN1pec), this protein is Aspartate carbamoyltransferase catalytic subunit.